Consider the following 314-residue polypeptide: Small ribosomal subunit protein uS11m (314 aa).

The N-terminal 37 residues, 1–37 (MNGVSRHLRASSLLSLIRSYGGINSVCRFSSQSDGFS), are a transit peptide targeting the mitochondrion. The disordered stretch occupies residues 34 to 138 (DGFSGGRFRE…GSGFSAPSLS (105 aa)). A compositionally biased stretch (polar residues) spans 50-63 (ESANNSGLSNTGRI). Over residues 103–114 (SSLRSRLPNSLP) the composition is skewed to low complexity.

It belongs to the universal ribosomal protein uS11 family. In terms of assembly, component of the mitochondrial ribosome small subunit (28S) which comprises a 12S rRNA and about 30 distinct proteins.

The protein resides in the mitochondrion. Required for karyogamy during female gametophyte development, when the two polar nuclei fuse to form the diploid central cell nucleus. The polypeptide is Small ribosomal subunit protein uS11m (Arabidopsis thaliana (Mouse-ear cress)).